A 743-amino-acid chain; its full sequence is Catalase-peroxidase (743 aa).

Residues 1 to 22 (MEKQSNDAAVAGAPNDHGAAKC) form a disordered region. The tryptophyl-tyrosyl-methioninium (Trp-Tyr) (with M-253) cross-link spans 105 to 227 (WHSAGTYRIT…LGAVQMGLIY (123 aa)). His-106 (proton acceptor) is an active-site residue. The tryptophyl-tyrosyl-methioninium (Tyr-Met) (with W-105) cross-link spans 227 to 253 (YVNPEGPNGNPDPVAAAKDIRETFFRM). His-268 is a binding site for heme b.

Belongs to the peroxidase family. Peroxidase/catalase subfamily. As to quaternary structure, homodimer or homotetramer. The cofactor is heme b. Post-translationally, formation of the three residue Trp-Tyr-Met cross-link is important for the catalase, but not the peroxidase activity of the enzyme.

The enzyme catalyses H2O2 + AH2 = A + 2 H2O. The catalysed reaction is 2 H2O2 = O2 + 2 H2O. Its function is as follows. Bifunctional enzyme with both catalase and broad-spectrum peroxidase activity. In Solibacter usitatus (strain Ellin6076), this protein is Catalase-peroxidase.